The primary structure comprises 400 residues: Argininosuccinate synthase (400 aa).

Residue 8–16 (AYSGGLDTS) participates in ATP binding. 2 residues coordinate L-citrulline: Tyr-87 and Ser-92. Gly-117 is an ATP binding site. L-aspartate is bound by residues Thr-119, Asn-123, and Asp-124. L-citrulline is bound at residue Asn-123. L-citrulline-binding residues include Arg-127, Ser-175, Glu-259, and Tyr-271.

It belongs to the argininosuccinate synthase family. Type 1 subfamily. In terms of assembly, homotetramer.

It is found in the cytoplasm. It carries out the reaction L-citrulline + L-aspartate + ATP = 2-(N(omega)-L-arginino)succinate + AMP + diphosphate + H(+). Its pathway is amino-acid biosynthesis; L-arginine biosynthesis; L-arginine from L-ornithine and carbamoyl phosphate: step 2/3. The chain is Argininosuccinate synthase from Frankia casuarinae (strain DSM 45818 / CECT 9043 / HFP020203 / CcI3).